Here is a 133-residue protein sequence, read N- to C-terminus: UPF0102 protein ABSDF1354 (133 aa).

The protein belongs to the UPF0102 family.

The sequence is that of UPF0102 protein ABSDF1354 from Acinetobacter baumannii (strain SDF).